A 727-amino-acid polypeptide reads, in one-letter code: Beta-galactosidase 2 (727 aa).

The first 27 residues, 1-27, serve as a signal peptide directing secretion; the sequence is MSMHFRNKAWIILAILCFSSLIHSTEA. Glu-185 (proton donor) is an active-site residue. Glu-254 acts as the Nucleophile in catalysis. A glycan (N-linked (GlcNAc...) asparagine) is linked at Asn-255.

Belongs to the glycosyl hydrolase 35 family. In terms of tissue distribution, ubiquitous, with higher expression levels in roots and siliques.

It is found in the secreted. It localises to the extracellular space. The protein localises to the apoplast. The catalysed reaction is Hydrolysis of terminal non-reducing beta-D-galactose residues in beta-D-galactosides.. This Arabidopsis thaliana (Mouse-ear cress) protein is Beta-galactosidase 2 (BGAL2).